We begin with the raw amino-acid sequence, 288 residues long: HTH-type transcriptional repressor CarA (288 aa).

The 72-residue stretch at 2–73 folds into the HTH merR-type domain; it reads TLRIRTIARM…VSEAIAQVKT (72 aa). Positions 5–24 form a DNA-binding region, H-T-H motif; the sequence is IRTIARMTGIREATLRAWER. In terms of domain architecture, B12-binding spans 162 to 288; that stretch reads GPRALLACPS…NQVRNAQNRP (127 aa).

The protein belongs to the CarA/CarH B12-binding photoregulator family. Forms homodimers or oligomers. Interacts with CarS.

With respect to regulation, binds cobalamin (vitamin B12), but cobalamin is not required for CarA activity. Interaction with CarS prevents binding to DNA. Negative regulator of the carB operon in the dark. Binds specifically to the CarA operator, in the region around the carB promoter, which blocks access to the RNA polymerase. The chain is HTH-type transcriptional repressor CarA (carA) from Myxococcus xanthus.